The following is a 936-amino-acid chain: F-box protein dre-1 (936 aa).

The disordered stretch occupies residues 1 to 67; it reads MSSSSSPFFH…GSSEADNPTL (67 aa). Over residues 22–36 the composition is skewed to low complexity; that stretch reads QQSPSYSQNSNSPSQ. Positions 48-63 are enriched in polar residues; the sequence is GSTSMRYSPSGSSEAD. Residues 159–205 enclose the F-box domain; that stretch reads QDHINRLPEELLLKVFSFLPDKSLLACSSVSYRFNQISNSHEVWKEL. PbH1 repeat units follow at residues 405–427, 428–450, 451–473, 474–496, 497–519, 520–542, 543–565, 566–588, 589–611, 612–634, 635–657, 658–680, 681–703, 704–726, 727–749, 750–772, 773–795, and 796–818; these read SAAP…YITD, NATG…WVKN, HANP…FTFE, HGQG…EVKN, SANP…YVHE, RGRG…WITS, HSDP…YIFG, EGRG…QIRS, QSDP…YVHE, KGRG…WVTT, GSSP…YFYD, QGHG…QIRT, GSNP…LVYN, GGKG…WIKT, DSEP…CIFN, RGKG…LIST, ESNP…EITN, and GATA…CVAT. Residues 843-914 form a UBR-type zinc finger; that stretch reads GLCLFKVSSN…LERHCHLQNV (72 aa).

In terms of assembly, component of a SCF ubiquitin ligase complex. Interacts (via F-box) with skr-1. Interacts with blmp-1; the interaction targets blmp-1 for proteasomal degradation. Interacts with ced-9; the interaction inhibits ced-9 activity, either directly or indirectly. In mid-embryogenesis, expression is most prominent in epidermal and intestinal cells. By the 1.5-fold stage of embryogenesis, expression is additionally detected in neurons and other cells. During larval and adult stages, highest expression is seen in epidermal seam cells and hypodermis. In larvae, strongly expressed in the P epidermal blast cells and descendents that give rise to the vulva and weakly expressed in the somatic gonad, including the gonadoblasts, the anchor cell and the distal tip cells. Some weak expression also seen in adult spermatheca and uterus. In the musculature, expressed in the pharynx, anal depressor, sex muscles, and body wall muscles. Detected in neurons of the head, tail, ventral cord and periphery. Also expressed in the embryonic tail spike cell.

It is found in the nucleus. It localises to the cytoplasm. Its pathway is protein modification; protein ubiquitination. Substrate recognition component of a SCF (SKP1-CUL1-F-box protein) E3 ubiquitin-protein ligase complex which mediates the ubiquitination and subsequent proteasomal degradation of target proteins including blmp-1. Promotes ubiquitination of snail family proteins ces-1, scrt-1 and snai-1. Heterochronic protein which is required for the timing of gonad development and epidermal seam cell differentiation. Regulates tail-spike cell death through inhibition of the apoptosis regulator ced-9. The polypeptide is F-box protein dre-1 (Caenorhabditis elegans).